We begin with the raw amino-acid sequence, 209 residues long: ATP-dependent Clp protease proteolytic subunit (209 aa).

Serine 107 acts as the Nucleophile in catalysis. Histidine 132 is an active-site residue.

It belongs to the peptidase S14 family. Fourteen ClpP subunits assemble into 2 heptameric rings which stack back to back to give a disk-like structure with a central cavity, resembling the structure of eukaryotic proteasomes.

It is found in the cytoplasm. It carries out the reaction Hydrolysis of proteins to small peptides in the presence of ATP and magnesium. alpha-casein is the usual test substrate. In the absence of ATP, only oligopeptides shorter than five residues are hydrolyzed (such as succinyl-Leu-Tyr-|-NHMec, and Leu-Tyr-Leu-|-Tyr-Trp, in which cleavage of the -Tyr-|-Leu- and -Tyr-|-Trp bonds also occurs).. Its function is as follows. Cleaves peptides in various proteins in a process that requires ATP hydrolysis. Has a chymotrypsin-like activity. Plays a major role in the degradation of misfolded proteins. The protein is ATP-dependent Clp protease proteolytic subunit of Methylobacterium nodulans (strain LMG 21967 / CNCM I-2342 / ORS 2060).